Consider the following 391-residue polypeptide: Outer membrane protein 41 (391 aa).

An N-terminal signal peptide occupies residues 1–20; the sequence is MKVKYLMLTLVGAIALNASA. Glutamine 21 bears the Pyrrolidone carboxylic acid mark. One can recognise an OmpA-like domain in the interval 282-391; that stretch reads TKTENILTEK…WNRVVIVRSK (110 aa).

Belongs to the outer membrane OOP (TC 1.B.6) superfamily. Disulfide-linked heterodimer with Omp40.

The protein resides in the cell outer membrane. Functionally, may have porin activity and function in peptidoglycan binding. The chain is Outer membrane protein 41 from Porphyromonas gingivalis (strain ATCC BAA-308 / W83).